The chain runs to 61 residues: Small ribosomal subunit protein uS14 (61 aa).

Cysteine 24, cysteine 27, cysteine 40, and cysteine 43 together coordinate Zn(2+).

Belongs to the universal ribosomal protein uS14 family. Zinc-binding uS14 subfamily. Part of the 30S ribosomal subunit. Contacts proteins S3 and S10. Zn(2+) is required as a cofactor.

Functionally, binds 16S rRNA, required for the assembly of 30S particles and may also be responsible for determining the conformation of the 16S rRNA at the A site. The chain is Small ribosomal subunit protein uS14 from Geobacter metallireducens (strain ATCC 53774 / DSM 7210 / GS-15).